The primary structure comprises 205 residues: High frequency lysogenization protein HflD homolog (205 aa).

The protein belongs to the HflD family.

The protein resides in the cytoplasm. It is found in the cell inner membrane. This Shewanella oneidensis (strain ATCC 700550 / JCM 31522 / CIP 106686 / LMG 19005 / NCIMB 14063 / MR-1) protein is High frequency lysogenization protein HflD homolog.